The sequence spans 399 residues: O-antigen polymerase (399 aa).

Transmembrane regions (helical) follow at residues 4–24 (FPPG…LVLV), 37–57 (LVFT…LTIF), 64–84 (AIMG…LVIL), 97–117 (IVCY…IDVL), 151–171 (GGFS…LLCM), 185–205 (IISF…AILV), 222–242 (FCGI…TNIF), 309–329 (FFWI…IYLA), 353–373 (LYFL…APSS), and 374–394 (STFS…KLTN).

Its subcellular location is the cell inner membrane. It carries out the reaction n lipid-linked O-antigen repeat units = a lipid-linked O antigen + (n-1) polyisoprenyl diphosphate.. It participates in bacterial outer membrane biogenesis; LPS O-antigen biosynthesis. Functionally, polymerase involved in the biosynthesis of the lipopolysaccharide (LPS). Catalyzes the polymerization of the O-antigen repeat units on the periplasmic face of the inner membrane, leading to the formation of the lipid-linked O-antigen molecule. The sequence is that of O-antigen polymerase from Salmonella muenchen.